A 115-amino-acid polypeptide reads, in one-letter code: Nucleoid-associated protein NATL1_00191 (115 aa).

The disordered stretch occupies residues 89–115; sequence STSTMKERMEDLTGGFKLNLPGMGEES.

Belongs to the YbaB/EbfC family. In terms of assembly, homodimer.

The protein resides in the cytoplasm. It is found in the nucleoid. Binds to DNA and alters its conformation. May be involved in regulation of gene expression, nucleoid organization and DNA protection. In Prochlorococcus marinus (strain NATL1A), this protein is Nucleoid-associated protein NATL1_00191.